A 217-amino-acid polypeptide reads, in one-letter code: Proteasome subunit beta (217 aa).

Positions 1-14 are cleaved as a propeptide — removed in mature form; by autocatalysis; the sequence is MIANNDQYKEYMKG. Thr15 serves as the catalytic Nucleophile.

Belongs to the peptidase T1B family. In terms of assembly, the 20S proteasome core is composed of 14 alpha and 14 beta subunits that assemble into four stacked heptameric rings, resulting in a barrel-shaped structure. The two inner rings, each composed of seven catalytic beta subunits, are sandwiched by two outer rings, each composed of seven alpha subunits. The catalytic chamber with the active sites is on the inside of the barrel. Has a gated structure, the ends of the cylinder being occluded by the N-termini of the alpha-subunits. Is capped at one or both ends by the proteasome regulatory ATPase, PAN.

The protein resides in the cytoplasm. The enzyme catalyses Cleavage of peptide bonds with very broad specificity.. The formation of the proteasomal ATPase PAN-20S proteasome complex, via the docking of the C-termini of PAN into the intersubunit pockets in the alpha-rings, triggers opening of the gate for substrate entry. Interconversion between the open-gate and close-gate conformations leads to a dynamic regulation of the 20S proteasome proteolysis activity. In terms of biological role, component of the proteasome core, a large protease complex with broad specificity involved in protein degradation. The sequence is that of Proteasome subunit beta from Methanococcus aeolicus (strain ATCC BAA-1280 / DSM 17508 / OCM 812 / Nankai-3).